Reading from the N-terminus, the 304-residue chain is Protein Largen (304 aa).

A compositionally biased stretch (polar residues) spans 1-13 (MSAKSKGNPSSSC). Disordered stretches follow at residues 1–27 (MSAK…TKVK), 66–91 (QLED…TASS), 114–160 (LTVL…GGLP), and 239–304 (HPPG…TTTV). A coiled-coil region spans residues 33 to 70 (IVEDLELVLGDLKDVAKELKEVVDQIDTLTSDLQLEDE). Low complexity predominate over residues 77-91 (TDTLNSSSSGTTASS). Composition is skewed to pro residues over residues 120 to 129 (PNPPPPPPRL), 239 to 261 (HPPG…PPFP), and 277 to 289 (PIRP…PTAP).

Functionally, regulator of cell size that promotes cell size increase independently of mTOR and Hippo signaling pathways. Acts by stimulating the translation of specific mRNAs, including those encoding proteins affecting mitochondrial functions. Increases mitochondrial mass and respiration. This Homo sapiens (Human) protein is Protein Largen (PRR16).